A 289-amino-acid chain; its full sequence is E3 ubiquitin-protein ligase MARCHF5 (289 aa).

An RING-CH-type zinc finger spans residues 4–73 (VDEPPEKHCW…PQCGTEYRIV (70 aa)). Residues Cys-12, Cys-15, Cys-31, Cys-33, His-41, Cys-44, Cys-63, and Cys-66 each coordinate Zn(2+). A run of 4 helical transmembrane segments spans residues 97–117 (FAAAGVVVGTVYWSAVTYGAV), 137–157 (PLFLLMGLPTIPVMLVLGKMI), 202–222 (LSVSRTLCGALIFPSIANLVG), and 236–256 (TILGGIAFVVMKGVLKVYFKQ).

It localises to the mitochondrion outer membrane. Its subcellular location is the endoplasmic reticulum membrane. The enzyme catalyses S-ubiquitinyl-[E2 ubiquitin-conjugating enzyme]-L-cysteine + [acceptor protein]-L-lysine = [E2 ubiquitin-conjugating enzyme]-L-cysteine + N(6)-ubiquitinyl-[acceptor protein]-L-lysine.. It functions in the pathway protein modification; protein ubiquitination. Functionally, mitochondrial E3 ubiquitin-protein ligase that plays a crucial role in the control of mitochondrial morphology by acting as a positive regulator of mitochondrial fission. May play a role in the prevention of cell senescence acting as a regulator of mitochondrial quality control. The polypeptide is E3 ubiquitin-protein ligase MARCHF5 (marchf5) (Danio rerio (Zebrafish)).